A 441-amino-acid polypeptide reads, in one-letter code: Glutamyl-tRNA reductase (441 aa).

Residues 49-52, Ser110, 115-117, and Gln121 each bind substrate; these read TCNR and EPQ. Cys50 (nucleophile) is an active-site residue. 190 to 195 provides a ligand contact to NADP(+); that stretch reads GAGEMA.

This sequence belongs to the glutamyl-tRNA reductase family. Homodimer.

The catalysed reaction is (S)-4-amino-5-oxopentanoate + tRNA(Glu) + NADP(+) = L-glutamyl-tRNA(Glu) + NADPH + H(+). The protein operates within porphyrin-containing compound metabolism; protoporphyrin-IX biosynthesis; 5-aminolevulinate from L-glutamyl-tRNA(Glu): step 1/2. Functionally, catalyzes the NADPH-dependent reduction of glutamyl-tRNA(Glu) to glutamate 1-semialdehyde (GSA). The polypeptide is Glutamyl-tRNA reductase (Sulfurihydrogenibium sp. (strain YO3AOP1)).